The primary structure comprises 527 residues: Inosine-5'-monophosphate dehydrogenase (527 aa).

CBS domains lie at 121 to 183 (FILD…VTAV) and 184 to 240 (MSTD…PLAS). NAD(+) is bound by residues 277–279 (DSS) and 327–329 (GMG). The K(+) site is built by glycine 329 and glycine 331. Serine 332 contributes to the IMP binding site. Cysteine 334 is a K(+) binding site. Cysteine 334 (thioimidate intermediate) is an active-site residue. IMP-binding positions include 367 to 369 (DGG) and 390 to 391 (GS). The Proton acceptor role is filled by arginine 440. An IMP-binding site is contributed by glutamine 452. Positions 506–527 (ASAQTEGNVHGLHSHEKKLYSS) are disordered. The K(+) site is built by glutamate 511 and glycine 512. The span at 518-527 (HSHEKKLYSS) shows a compositional bias: basic and acidic residues.

The protein belongs to the IMPDH/GMPR family. Homotetramer. K(+) serves as cofactor.

It is found in the cytoplasm. The catalysed reaction is IMP + NAD(+) + H2O = XMP + NADH + H(+). Its pathway is purine metabolism; XMP biosynthesis via de novo pathway; XMP from IMP: step 1/1. With respect to regulation, mycophenolic acid (MPA) is a non-competitive inhibitor that prevents formation of the closed enzyme conformation by binding to the same site as the amobile flap. In contrast, mizoribine monophosphate (MZP) is a competitive inhibitor that induces the closed conformation. MPA is a potent inhibitor of mammalian IMPDHs but a poor inhibitor of the bacterial enzymes. MZP is a more potent inhibitor of bacterial IMPDH. Catalyzes the conversion of inosine 5'-phosphate (IMP) to xanthosine 5'-phosphate (XMP), the first committed and rate-limiting step in the de novo synthesis of guanine nucleotides, and therefore plays an important role in the regulation of cell growth. Part of the gene cluster that mediates the biosynthesis of mycophenolic acid (MPA), the first isolated antibiotic natural product in the world. Does not play a role in the biosynthesis of MPA, but is involved in self resistance to MPA, since MPA acts as an inhibitor of IMP dehydrogenases. The polypeptide is Inosine-5'-monophosphate dehydrogenase (Penicillium brevicompactum).